The chain runs to 274 residues: Rhamnulose-1-phosphate aldolase (274 aa).

Residue glutamate 117 is part of the active site. The Zn(2+) site is built by histidine 141, histidine 143, and histidine 212.

This sequence belongs to the aldolase class II family. RhaD subfamily. As to quaternary structure, homotetramer. It depends on Zn(2+) as a cofactor.

It is found in the cytoplasm. It catalyses the reaction L-rhamnulose 1-phosphate = (S)-lactaldehyde + dihydroxyacetone phosphate. Its pathway is carbohydrate degradation; L-rhamnose degradation; glycerone phosphate from L-rhamnose: step 3/3. In terms of biological role, catalyzes the reversible cleavage of L-rhamnulose-1-phosphate to dihydroxyacetone phosphate (DHAP) and L-lactaldehyde. The protein is Rhamnulose-1-phosphate aldolase of Escherichia coli O127:H6 (strain E2348/69 / EPEC).